The sequence spans 82 residues: Translational regulator CsrA (82 aa).

This sequence belongs to the CsrA/RsmA family. Homodimer; the beta-strands of each monomer intercalate to form a hydrophobic core, while the alpha-helices form wings that extend away from the core.

The protein localises to the cytoplasm. Functionally, a translational regulator that binds mRNA to regulate translation initiation and/or mRNA stability. Usually binds in the 5'-UTR at or near the Shine-Dalgarno sequence preventing ribosome-binding, thus repressing translation. Its main target seems to be the major flagellin gene, while its function is anatagonized by FliW. This is Translational regulator CsrA from Brachyspira hyodysenteriae (strain ATCC 49526 / WA1).